Here is a 109-residue protein sequence, read N- to C-terminus: Class I hydrophobin G (109 aa).

The first 19 residues, 1–19 (MRLSILSVFSLVGAGMVSA), serve as a signal peptide directing secretion. Intrachain disulfides connect cysteine 36–cysteine 90, cysteine 42–cysteine 84, cysteine 43–cysteine 76, and cysteine 91–cysteine 105.

Belongs to the fungal hydrophobin family.

The protein resides in the secreted. It localises to the cell wall. Aerial growth, conidiation, and dispersal of filamentous fungi in the environment rely upon a capability of their secreting small amphipathic proteins called hydrophobins (HPBs) with low sequence identity. Class I can self-assemble into an outermost layer of rodlet bundles on aerial cell surfaces, conferring cellular hydrophobicity that supports fungal growth, development and dispersal; whereas Class II form highly ordered films at water-air interfaces through intermolecular interactions but contribute nothing to the rodlet structure. In P.expansum, hydrophobins contribute to germination, tolerance to cold stress and mycotoxins patulin and citrinin production. The chain is Class I hydrophobin G from Penicillium expansum (Blue mold rot fungus).